Here is a 206-residue protein sequence, read N- to C-terminus: Small ribosomal subunit protein uS4 (206 aa).

Residues 96–156 (GRLDNVVYRM…EKAKQQARIK (61 aa)) enclose the S4 RNA-binding domain.

Belongs to the universal ribosomal protein uS4 family. In terms of assembly, part of the 30S ribosomal subunit. Contacts protein S5. The interaction surface between S4 and S5 is involved in control of translational fidelity.

In terms of biological role, one of the primary rRNA binding proteins, it binds directly to 16S rRNA where it nucleates assembly of the body of the 30S subunit. Its function is as follows. With S5 and S12 plays an important role in translational accuracy. The polypeptide is Small ribosomal subunit protein uS4 (Vibrio campbellii (strain ATCC BAA-1116)).